Consider the following 355-residue polypeptide: Neurogenic differentiation factor 1 (355 aa).

Residues 1–93 (MTKSYSESGL…GPKKKKMTKA (93 aa)) form a disordered region. Over residues 58-77 (DEEDEDEDLEEEDEEEEEDD) the composition is skewed to acidic residues. Positions 80–92 (PKRRGPKKKKMTK) are enriched in basic residues. The short motif at 86-92 (KKKKMTK) is the Nuclear localization signal element. The bHLH domain maps to 100 to 152 (LRRMKANARERNRMHGLNAALDNLRKVVPCYSKTQKLSKIETLRLAKNYIWAL). Phosphoserine occurs at positions 161, 258, 265, and 273. Position 334 is a phosphoserine; by CaMK2 (S334).

In terms of assembly, efficient DNA-binding requires dimerization with another bHLH protein. Heterodimer with TCF3/E47; the heterodimer is inhibited in presence of ID2, but not NR0B2, to E-box element. Interacts with EP300; the interaction is inhibited by NR0B2. Interacts with RREB1. Interacts with ATOH8. Phosphorylated. In islet cells, phosphorylated on Ser-273 upon glucose stimulation; which may be required for nuclear localization. In activated neurons, phosphorylated on Ser-334; which promotes dendritic growth. Phosphorylated by MAPK1; phosphorylation regulates heterodimerization and DNA-binding activities. Phosphorylation on Ser-265 and Ser-273 increases transactivation on the insulin promoter in glucose-stimulated insulinoma cells. As to expression, most abundant in pancreatic alpha- and beta-cells, less in brain and intestine.

Its subcellular location is the cytoplasm. The protein localises to the nucleus. In terms of biological role, acts as a transcriptional activator: mediates transcriptional activation by binding to E box-containing promoter consensus core sequences 5'-CANNTG-3'. Associates with the p300/CBP transcription coactivator complex to stimulate transcription of the secretin gene as well as the gene encoding the cyclin-dependent kinase inhibitor CDKN1A. Contributes to the regulation of several cell differentiation pathways, like those that promote the formation of early retinal ganglion cells, inner ear sensory neurons, granule cells forming either the cerebellum or the dentate gyrus cell layer of the hippocampus, endocrine islet cells of the pancreas and enteroendocrine cells of the small intestine. Together with PAX6 or SIX3, is required for the regulation of amacrine cell fate specification. Also required for dendrite morphogenesis and maintenance in the cerebellar cortex. Associates with chromatin to enhancer regulatory elements in genes encoding key transcriptional regulators of neurogenesis. The chain is Neurogenic differentiation factor 1 (NEUROD1) from Mesocricetus auratus (Golden hamster).